The primary structure comprises 375 residues: Alanine racemase (375 aa).

Lysine 40 (proton acceptor; specific for D-alanine) is an active-site residue. Position 40 is an N6-(pyridoxal phosphate)lysine (lysine 40). Arginine 140 serves as a coordination point for substrate. The active-site Proton acceptor; specific for L-alanine is the tyrosine 268. Methionine 315 is a substrate binding site.

The protein belongs to the alanine racemase family. Requires pyridoxal 5'-phosphate as cofactor.

It catalyses the reaction L-alanine = D-alanine. Its pathway is amino-acid biosynthesis; D-alanine biosynthesis; D-alanine from L-alanine: step 1/1. Its function is as follows. Catalyzes the interconversion of L-alanine and D-alanine. May also act on other amino acids. The sequence is that of Alanine racemase (alr) from Limosilactobacillus reuteri (strain DSM 20016) (Lactobacillus reuteri).